The sequence spans 132 residues: UPF0102 protein Achl_2213 (132 aa).

This sequence belongs to the UPF0102 family.

The polypeptide is UPF0102 protein Achl_2213 (Pseudarthrobacter chlorophenolicus (strain ATCC 700700 / DSM 12829 / CIP 107037 / JCM 12360 / KCTC 9906 / NCIMB 13794 / A6) (Arthrobacter chlorophenolicus)).